The sequence spans 502 residues: Ubiquitin-like-specific protease 1A (502 aa).

Residues H393, D410, and C461 contribute to the active site.

This sequence belongs to the peptidase C48 family.

Protease that catalyzes two essential functions in the SUMO pathway: processing of full-length SUMOs to their mature forms and deconjugation of SUMO from targeted proteins. Cleaves precursors of SUM1 and SUM2, and very inefficiently of SUM3. Seems to be the only ULP1 able to cleave SUM3 precursors. Cleaves SUMO peptides better than SUMO-conjugated proteins. The chain is Ubiquitin-like-specific protease 1A (ULP1A) from Arabidopsis thaliana (Mouse-ear cress).